We begin with the raw amino-acid sequence, 433 residues long: Tyrosine--tRNA ligase (433 aa).

Position 34 (Tyr-34) interacts with L-tyrosine. The 'HIGH' region motif lies at 39–48 (PTASSLHVGS). Tyr-169 and Gln-173 together coordinate L-tyrosine. The short motif at 229-233 (KMGKT) is the 'KMSKS' region element. Lys-232 serves as a coordination point for ATP. Residues 364–432 (IPAFVLFHTV…RYHTIVVRKG (69 aa)) form the S4 RNA-binding domain.

Belongs to the class-I aminoacyl-tRNA synthetase family. TyrS type 1 subfamily. As to quaternary structure, homodimer.

The protein resides in the cytoplasm. It catalyses the reaction tRNA(Tyr) + L-tyrosine + ATP = L-tyrosyl-tRNA(Tyr) + AMP + diphosphate + H(+). Its function is as follows. Catalyzes the attachment of tyrosine to tRNA(Tyr) in a two-step reaction: tyrosine is first activated by ATP to form Tyr-AMP and then transferred to the acceptor end of tRNA(Tyr). The polypeptide is Tyrosine--tRNA ligase (Desulfosudis oleivorans (strain DSM 6200 / JCM 39069 / Hxd3) (Desulfococcus oleovorans)).